Reading from the N-terminus, the 794-residue chain is Protein sel-1 homolog 1 (794 aa).

An N-terminal signal peptide occupies residues 1–21 (MQVHVGLTLLLCAVLLSSATA). The tract at residues 20–91 (TASSDDESNQ…EEEVSVGEEI (72 aa)) is disordered. Residues 22 to 737 (SSDDESNQDE…DIFTQLDMDQ (716 aa)) form an interaction with ERLEC1, OS9 and SYVN1 region. At 22–738 (SSDDESNQDE…IFTQLDMDQL (717 aa)) the chain is on the lumenal side. Composition is skewed to acidic residues over residues 23-32 (SDDESNQDES) and 62-77 (DSED…EEEE). Ser-63 is modified (phosphoserine). The 49-residue stretch at 122–170 (AHGEPCHFPFLFLDKEYDECTSDGRQDGRLWCATTYDYKTDEKWGFCET) folds into the Fibronectin type-II domain. 2 disulfide bridges follow: Cys-127–Cys-153 and Cys-141–Cys-168. Sel1-like repeat units follow at residues 183–218 (AEMI…GMNH), 219–254 (TKAL…EEGS), 255–290 (PKGQ…LGGN), 291–326 (LIAH…NHVA), 373–409 (VQAQ…NAGN), 410–446 (SHAM…DMGN), 447–482 (PVGQ…EQGW), 483–518 (VDGQ…QGGH), and 519–554 (ILAF…ERGR). Asn-195 and Asn-217 each carry an N-linked (GlcNAc...) asparagine glycan. Asn-272 is a glycosylation site (N-linked (GlcNAc...) asparagine). The tract at residues 352-537 (NSGMLEEDLI…MHASGTGVMR (186 aa)) is important for homodimerization and oligomerization. N-linked (GlcNAc...) asparagine glycosylation occurs at Asn-431. An N-linked (GlcNAc...) asparagine glycan is attached at Asn-608. 2 Sel1-like repeats span residues 627 to 662 (TVAR…EQQH) and 664 to 699 (AQAM…EASP). The interval 643-723 (TDVDYETAFI…VVYFLQYIRE (81 aa)) is interaction with SYVN1. Residues 738 to 794 (LLGPEWDLYLMTIIALLLGTVIAYRQRQHQDVPVPRPPGPWPAPPQQEGPPEQQPPQ) form a mediates retention in the endoplasmic reticulum region. Residues 739–759 (LGPEWDLYLMTIIALLLGTVI) traverse the membrane as a helical segment. Topologically, residues 760 to 794 (AYRQRQHQDVPVPRPPGPWPAPPQQEGPPEQQPPQ) are cytoplasmic. The tract at residues 768–794 (DVPVPRPPGPWPAPPQQEGPPEQQPPQ) is disordered. The segment covering 771-794 (VPRPPGPWPAPPQQEGPPEQQPPQ) has biased composition (pro residues).

Belongs to the sel-1 family. As to quaternary structure, homodimer and homooligomer. May form a complex with ERLEC1, HSPA5, OS9, and SYVN1. Interacts with FOXRED2 and EDEM1. Interacts with LPL and LMF1; may stabilize the complex formed by LPL and LMF1 and thereby promote the export of LPL dimers. Component of the HRD1 complex, which comprises at least SYNV1/HRD1, DERL1/2, FAM8A1, HERPUD1/HERP, OS9, SEL1L and UBE2J1. SYNV1 assembles with SEL1L and FAM8A1 through its transmembrane domains, but interaction with its cytoplasmic domain is required to confer stability to FAM8A1 and enhance recruitment of HERPUD1. The interaction with SYNV1/HRD1 is direct. Post-translationally, N-glycosylated.

The protein resides in the endoplasmic reticulum membrane. In terms of biological role, plays a role in the endoplasmic reticulum quality control (ERQC) system also called ER-associated degradation (ERAD) involved in ubiquitin-dependent degradation of misfolded endoplasmic reticulum proteins. Enhances SYVN1 stability. Plays a role in LPL maturation and secretion. Required for normal differentiation of the pancreas epithelium, and for normal exocrine function and survival of pancreatic cells. May play a role in Notch signaling. The chain is Protein sel-1 homolog 1 (Sel1l) from Mesocricetus auratus (Golden hamster).